Consider the following 70-residue polypeptide: MKQGIHPNYVEITATCSCGNVIKTHSTVGKDLNLDVCGNCHPFYTGKQRVVDTGGRVERFNKRFSIPSTK.

C16, C18, C37, and C40 together coordinate Zn(2+).

Belongs to the bacterial ribosomal protein bL31 family. Type A subfamily. Part of the 50S ribosomal subunit. Zn(2+) is required as a cofactor.

Its function is as follows. Binds the 23S rRNA. This chain is Large ribosomal subunit protein bL31, found in Glaesserella parasuis serovar 5 (strain SH0165) (Haemophilus parasuis).